A 216-amino-acid chain; its full sequence is Protein Syd (216 aa).

This sequence belongs to the Syd family.

The protein resides in the cell inner membrane. In terms of biological role, interacts with the SecY protein in vivo. May bind preferentially to an uncomplexed state of SecY, thus functioning either as a chelating agent for excess SecY in the cell or as a regulatory factor that negatively controls the translocase function. This Shewanella baltica (strain OS195) protein is Protein Syd.